Here is a 341-residue protein sequence, read N- to C-terminus: S-adenosylmethionine:tRNA ribosyltransferase-isomerase (341 aa).

The protein belongs to the QueA family. In terms of assembly, monomer.

The protein resides in the cytoplasm. The enzyme catalyses 7-aminomethyl-7-carbaguanosine(34) in tRNA + S-adenosyl-L-methionine = epoxyqueuosine(34) in tRNA + adenine + L-methionine + 2 H(+). It participates in tRNA modification; tRNA-queuosine biosynthesis. Its function is as follows. Transfers and isomerizes the ribose moiety from AdoMet to the 7-aminomethyl group of 7-deazaguanine (preQ1-tRNA) to give epoxyqueuosine (oQ-tRNA). The chain is S-adenosylmethionine:tRNA ribosyltransferase-isomerase from Desulforamulus reducens (strain ATCC BAA-1160 / DSM 100696 / MI-1) (Desulfotomaculum reducens).